Reading from the N-terminus, the 151-residue chain is NADPH-dependent 7-cyano-7-deazaguanine reductase (151 aa).

Cys51 functions as the Thioimide intermediate in the catalytic mechanism. The Proton donor role is filled by Asp58. Residues 73–75 and 92–93 contribute to the substrate site; these read VES and HE.

The protein belongs to the GTP cyclohydrolase I family. QueF type 1 subfamily.

It is found in the cytoplasm. The enzyme catalyses 7-aminomethyl-7-carbaguanine + 2 NADP(+) = 7-cyano-7-deazaguanine + 2 NADPH + 3 H(+). It participates in tRNA modification; tRNA-queuosine biosynthesis. Functionally, catalyzes the NADPH-dependent reduction of 7-cyano-7-deazaguanine (preQ0) to 7-aminomethyl-7-deazaguanine (preQ1). This chain is NADPH-dependent 7-cyano-7-deazaguanine reductase, found in Bacteroides fragilis (strain ATCC 25285 / DSM 2151 / CCUG 4856 / JCM 11019 / LMG 10263 / NCTC 9343 / Onslow / VPI 2553 / EN-2).